Reading from the N-terminus, the 148-residue chain is Deoxyuridine 5'-triphosphate nucleotidohydrolase (148 aa).

Substrate is bound by residues 68–70 (RSG), Asn-81, 85–87 (TID), and Lys-95.

Belongs to the dUTPase family. The cofactor is Mg(2+).

It carries out the reaction dUTP + H2O = dUMP + diphosphate + H(+). It functions in the pathway pyrimidine metabolism; dUMP biosynthesis; dUMP from dCTP (dUTP route): step 2/2. Functionally, this enzyme is involved in nucleotide metabolism: it produces dUMP, the immediate precursor of thymidine nucleotides and it decreases the intracellular concentration of dUTP so that uracil cannot be incorporated into DNA. This chain is Deoxyuridine 5'-triphosphate nucleotidohydrolase, found in Rickettsia akari (strain Hartford).